Reading from the N-terminus, the 359-residue chain is Phospho-N-acetylmuramoyl-pentapeptide-transferase (359 aa).

Transmembrane regions (helical) follow at residues 3–23, 55–75, 84–104, 117–137, 156–176, 190–210, 231–251, 255–275, 283–303, and 330–350; these read QILI…PVLI, VAIV…GVVI, GLLV…DDLI, TAKT…ALQF, IATV…VVSA, LAAG…FWQF, LAII…WNAA, IFMG…LSVT, VVLG…ILAF, and VIIR…ALFY.

It belongs to the glycosyltransferase 4 family. MraY subfamily. Mg(2+) is required as a cofactor.

It localises to the cell membrane. It catalyses the reaction UDP-N-acetyl-alpha-D-muramoyl-L-alanyl-gamma-D-glutamyl-meso-2,6-diaminopimeloyl-D-alanyl-D-alanine + di-trans,octa-cis-undecaprenyl phosphate = di-trans,octa-cis-undecaprenyl diphospho-N-acetyl-alpha-D-muramoyl-L-alanyl-D-glutamyl-meso-2,6-diaminopimeloyl-D-alanyl-D-alanine + UMP. The protein operates within cell wall biogenesis; peptidoglycan biosynthesis. Functionally, catalyzes the initial step of the lipid cycle reactions in the biosynthesis of the cell wall peptidoglycan: transfers peptidoglycan precursor phospho-MurNAc-pentapeptide from UDP-MurNAc-pentapeptide onto the lipid carrier undecaprenyl phosphate, yielding undecaprenyl-pyrophosphoryl-MurNAc-pentapeptide, known as lipid I. The chain is Phospho-N-acetylmuramoyl-pentapeptide-transferase from Mycolicibacterium vanbaalenii (strain DSM 7251 / JCM 13017 / BCRC 16820 / KCTC 9966 / NRRL B-24157 / PYR-1) (Mycobacterium vanbaalenii).